Reading from the N-terminus, the 242-residue chain is Glucosamine-6-phosphate deaminase (242 aa).

Catalysis depends on aspartate 67, which acts as the Proton acceptor; for enolization step. Asparagine 136 functions as the For ring-opening step in the catalytic mechanism. Histidine 138 acts as the Proton acceptor; for ring-opening step in catalysis. Catalysis depends on glutamate 143, which acts as the For ring-opening step.

The protein belongs to the glucosamine/galactosamine-6-phosphate isomerase family. NagB subfamily.

The enzyme catalyses alpha-D-glucosamine 6-phosphate + H2O = beta-D-fructose 6-phosphate + NH4(+). The protein operates within amino-sugar metabolism; N-acetylneuraminate degradation; D-fructose 6-phosphate from N-acetylneuraminate: step 5/5. In terms of biological role, catalyzes the reversible isomerization-deamination of glucosamine 6-phosphate (GlcN6P) to form fructose 6-phosphate (Fru6P) and ammonium ion. This Clostridium perfringens (strain 13 / Type A) protein is Glucosamine-6-phosphate deaminase.